A 469-amino-acid polypeptide reads, in one-letter code: Glutamate--tRNA ligase 1 (469 aa).

Positions 8–18 (PSPTGYLHIGG) match the 'HIGH' region motif. The tract at residues 117-137 (TPRYDGTWRPEPGKELPPVPA) is disordered. Positions 240-244 (KLSKR) match the 'KMSKS' region motif. Lys243 is an ATP binding site.

The protein belongs to the class-I aminoacyl-tRNA synthetase family. Glutamate--tRNA ligase type 1 subfamily. In terms of assembly, monomer.

Its subcellular location is the cytoplasm. The catalysed reaction is tRNA(Glu) + L-glutamate + ATP = L-glutamyl-tRNA(Glu) + AMP + diphosphate. Catalyzes the attachment of glutamate to tRNA(Glu) in a two-step reaction: glutamate is first activated by ATP to form Glu-AMP and then transferred to the acceptor end of tRNA(Glu). This Aliarcobacter butzleri (strain RM4018) (Arcobacter butzleri) protein is Glutamate--tRNA ligase 1.